The sequence spans 1040 residues: Neprilysin-4 (1040 aa).

A disordered region spans residues M1 to N27. The segment at M1–R45 is required for maintaining muscle integrity. Topologically, residues M1–C55 are cytoplasmic. Residues K56 to M76 form a helical; Signal-anchor for type II membrane protein membrane-spanning segment. At R77–W1040 the chain is on the extracellular side. One can recognise a Peptidase M13 domain in the interval E251–W1040. Cystine bridges form between C277–C1025, C285–C985, C452–C700, and C909–C1037. N-linked (GlcNAc...) asparagine glycans are attached at residues N387, N593, N723, and N819. H872 provides a ligand contact to Zn(2+). Residue E873 is part of the active site. A Zn(2+)-binding site is contributed by H876. N916 carries an N-linked (GlcNAc...) asparagine glycan. E934 is a binding site for Zn(2+). Residue D938 is the Proton donor of the active site. Residue N969 is glycosylated (N-linked (GlcNAc...) asparagine).

This sequence belongs to the peptidase M13 family. As to quaternary structure, interacts (via intracellular domain) with the putative carbohydrate kinase CG3534. Zn(2+) serves as cofactor. Expressed in the gonads and testes of adults, and the adult and larval brain (at protein level). In embryos, expressed in the pericardial, muscle founder and glia cells (at protein level). In stage 12 embryos, expressed in specific dorsal muscle founder cells such as DA1 and DO2, and also in the certain pericardial progenitor cells where expression persists throughout embryogenesis. Expressed in the glia cells of the embryonic, larval and adult central nervous system. Expressed in the somatic muscles of larvae, pupae and adults. Isoform A: Detected in the male abdomen (at protein level). Isoform B: Not detected in the male or female abdomen (at protein level).

The protein resides in the cell membrane. It localises to the sarcoplasmic reticulum. It is found in the cytoplasm. The enzyme catalyses Preferential cleavage of polypeptides between hydrophobic residues, particularly with Phe or Tyr at P1'.. Its function is as follows. Metalloendoprotease which cleaves peptides at the amino side of hydrophobic residues - such as the hormones Akh and Dh31, and the neuropeptides Allatostatins (AST1, AST2, AST3 and AST4), Crz, Drosulfakinins (DSK-I and DSK-II), Lk, sNPF and the tachykinin peptides TK-1, TK-2, TK-4 and TK-5. Functions in female fertility, memory formation and may also act in regulating insulin signaling and food intake. Likely to be involved in controlling feeding behavior and the expression of insulin-like peptides by cleaving various regulatory peptides that include certain Drosulfakinins, Allatostatins and tachykinin peptides. Required in females for normal patterns of egg laying and hatching. Required in the dorsal paired medial neurons for the proper formation of long-term (LTM) and middle-term memories (MTM). Also required in the mushroom body neurons where it functions redundantly with neprilysins Nep2 and Nep3, in normal LTM formation. Functionally, cleaves angiotensin-1 and tachykinin neuropeptide substance P. Functions in maintaining muscle integrity, possibly independently of its endopeptidase activity. In Drosophila melanogaster (Fruit fly), this protein is Neprilysin-4.